We begin with the raw amino-acid sequence, 121 residues long: UPF0102 protein BHWA1_02005 (121 aa).

This sequence belongs to the UPF0102 family.

The polypeptide is UPF0102 protein BHWA1_02005 (Brachyspira hyodysenteriae (strain ATCC 49526 / WA1)).